Consider the following 143-residue polypeptide: Ribosome-binding factor A (143 aa).

The interval 123–143 (DKSLQENYKQNDKETKAEKLR) is disordered.

This sequence belongs to the RbfA family. Monomer. Binds 30S ribosomal subunits, but not 50S ribosomal subunits or 70S ribosomes.

It is found in the cytoplasm. One of several proteins that assist in the late maturation steps of the functional core of the 30S ribosomal subunit. Associates with free 30S ribosomal subunits (but not with 30S subunits that are part of 70S ribosomes or polysomes). Required for efficient processing of 16S rRNA. May interact with the 5'-terminal helix region of 16S rRNA. This Francisella tularensis subsp. novicida (strain U112) protein is Ribosome-binding factor A.